The sequence spans 187 residues: Adenylate kinase (187 aa).

10 to 15 serves as a coordination point for ATP; the sequence is GSGKGT. An NMP region spans residues 30-59; the sequence is STGDLLRAEVAAGSPLGLKAKEVMARGDLV. Residues Thr-31, Arg-36, 57–59, 85–88, and Gln-92 each bind AMP; these read DLV and GYPR. The interval 126 to 136 is LID; the sequence is GRAKAEGREDD. An ATP-binding site is contributed by Arg-127. Arg-133 and Arg-144 together coordinate AMP. Residue Gly-172 coordinates ATP.

It belongs to the adenylate kinase family. In terms of assembly, monomer.

It localises to the cytoplasm. It catalyses the reaction AMP + ATP = 2 ADP. Its pathway is purine metabolism; AMP biosynthesis via salvage pathway; AMP from ADP: step 1/1. Functionally, catalyzes the reversible transfer of the terminal phosphate group between ATP and AMP. Plays an important role in cellular energy homeostasis and in adenine nucleotide metabolism. The sequence is that of Adenylate kinase from Xanthomonas axonopodis pv. citri (strain 306).